Reading from the N-terminus, the 1036-residue chain is Phytosulfokine receptor 2 (1036 aa).

Residues 1–16 (MVIILLLVFFVGSSVS) form the signal peptide. 2 N-linked (GlcNAc...) asparagine glycosylation sites follow: asparagine 36 and asparagine 45. LRR repeat units lie at residues 89–111 (ELRV…ISKL), 113–136 (QLQV…SGLK), 137–159 (LIQS…GVFP), 160–182 (GLVM…LCSS), 185–207 (GIQV…YNCS), 209–231 (SIQQ…LYSI), 233–256 (ELEQ…SNLS), 257–279 (GLKS…FGNL), 281–303 (QLEH…LSQC), 305–326 (KLRV…NFTG), 329–351 (DLCV…LGHC), 353–375 (KMKI…FKNL), 377–398 (SLLF…MNVL), 403–423 (NLST…NNVT), 427–450 (NLAI…LNCK), 451–473 (KLEV…IGKM), and 475–498 (SLFY…TELK). 3 N-linked (GlcNAc...) asparagine glycosylation sites follow: asparagine 142, asparagine 165, and asparagine 205. N-linked (GlcNAc...) asparagine glycans are attached at residues asparagine 251, asparagine 254, and asparagine 278. N-linked (GlcNAc...) asparagine glycosylation is found at asparagine 313 and asparagine 323. 3 N-linked (GlcNAc...) asparagine glycosylation sites follow: asparagine 385, asparagine 403, and asparagine 421. Residues asparagine 483, asparagine 504, asparagine 523, asparagine 549, and asparagine 571 are each glycosylated (N-linked (GlcNAc...) asparagine). LRR repeat units lie at residues 561-583 (ELHM…ISGL) and 585-606 (NLEV…SFQS). The helical transmembrane segment at 680–700 (IVVLTISLAIGITLLLSVILL) threads the bilayer. Residue threonine 751 is modified to Phosphothreonine. Positions 754-1025 (FSQANIIGCG…PLIEEVVTWL (272 aa)) constitute a Protein kinase domain. ATP contacts are provided by residues 760 to 768 (IGCGGFGLV) and lysine 782. 2 positions are modified to phosphotyrosine: tyrosine 827 and tyrosine 867. The active-site Proton acceptor is aspartate 880. Tyrosine 922 carries the post-translational modification Phosphotyrosine. The LRR 20 repeat unit spans residues 995–1020 (RTVLEMLEIACKCIDHEPRRRPLIEE).

This sequence belongs to the protein kinase superfamily. Ser/Thr protein kinase family.

It localises to the cell membrane. It carries out the reaction L-seryl-[protein] + ATP = O-phospho-L-seryl-[protein] + ADP + H(+). It catalyses the reaction L-threonyl-[protein] + ATP = O-phospho-L-threonyl-[protein] + ADP + H(+). Phytosulfokine receptor with a serine/threonine-protein kinase activity. The protein is Phytosulfokine receptor 2 (PSKR2) of Arabidopsis thaliana (Mouse-ear cress).